Consider the following 361-residue polypeptide: 5-formaminoimidazole-4-carboxamide-1-(beta)-D-ribofuranosyl 5'-monophosphate synthetase (361 aa).

5-amino-1-(5-phospho-beta-D-ribosyl)imidazole-4-carboxamide contacts are provided by His-27 and Ser-94. An ATP-grasp domain is found at 116–348; it reads RAILRWEAER…MGQRIAREIK (233 aa). Residues 146–208 and Glu-230 contribute to the ATP site; that span reads PDDI…ANYC. Asn-258 is a binding site for 5-amino-1-(5-phospho-beta-D-ribosyl)imidazole-4-carboxamide. Mg(2+) contacts are provided by Gln-297 and Glu-310.

This sequence belongs to the phosphohexose mutase family. It depends on Mg(2+) as a cofactor. The cofactor is Mn(2+).

It carries out the reaction 5-amino-1-(5-phospho-beta-D-ribosyl)imidazole-4-carboxamide + formate + ATP = 5-formamido-1-(5-phospho-D-ribosyl)imidazole-4-carboxamide + ADP + phosphate. It functions in the pathway purine metabolism; IMP biosynthesis via de novo pathway; 5-formamido-1-(5-phospho-D-ribosyl)imidazole-4-carboxamide from 5-amino-1-(5-phospho-D-ribosyl)imidazole-4-carboxamide (formate route): step 1/1. Its function is as follows. Catalyzes the ATP- and formate-dependent formylation of 5-aminoimidazole-4-carboxamide-1-beta-d-ribofuranosyl 5'-monophosphate (AICAR) to 5-formaminoimidazole-4-carboxamide-1-beta-d-ribofuranosyl 5'-monophosphate (FAICAR) in the absence of folates. In Methanococcus maripaludis (strain C7 / ATCC BAA-1331), this protein is 5-formaminoimidazole-4-carboxamide-1-(beta)-D-ribofuranosyl 5'-monophosphate synthetase.